Here is a 422-residue protein sequence, read N- to C-terminus: Enolase (422 aa).

Glutamine 162 provides a ligand contact to (2R)-2-phosphoglycerate. Residue glutamate 204 is the Proton donor of the active site. The Mg(2+) site is built by aspartate 241, glutamate 284, and aspartate 311. 4 residues coordinate (2R)-2-phosphoglycerate: lysine 336, arginine 365, serine 366, and lysine 387. Lysine 336 acts as the Proton acceptor in catalysis.

It belongs to the enolase family. The cofactor is Mg(2+).

The protein localises to the cytoplasm. It is found in the secreted. The protein resides in the cell surface. It carries out the reaction (2R)-2-phosphoglycerate = phosphoenolpyruvate + H2O. It functions in the pathway carbohydrate degradation; glycolysis; pyruvate from D-glyceraldehyde 3-phosphate: step 4/5. Catalyzes the reversible conversion of 2-phosphoglycerate (2-PG) into phosphoenolpyruvate (PEP). It is essential for the degradation of carbohydrates via glycolysis. This Thermus thermophilus (strain ATCC 27634 / DSM 579 / HB8) protein is Enolase.